Consider the following 475-residue polypeptide: UDP-N-acetylmuramate--L-alanine ligase (475 aa).

Residue 118–124 participates in ATP binding; it reads GTHGKTT.

Belongs to the MurCDEF family.

Its subcellular location is the cytoplasm. It catalyses the reaction UDP-N-acetyl-alpha-D-muramate + L-alanine + ATP = UDP-N-acetyl-alpha-D-muramoyl-L-alanine + ADP + phosphate + H(+). It participates in cell wall biogenesis; peptidoglycan biosynthesis. Functionally, cell wall formation. The chain is UDP-N-acetylmuramate--L-alanine ligase from Paracoccus denitrificans (strain Pd 1222).